The sequence spans 74 residues: CLAVATA3/ESR (CLE)-related protein 1 (74 aa).

Positions 1 to 22 (MANLKFLLCLFLICVSLSRSSA) are cleaved as a signal peptide. The N-linked (GlcNAc...) asparagine glycan is linked to N59. Residues P66 and P69 each carry the hydroxyproline modification. O-linked (Ara...) hydroxyproline glycosylation is present at P69.

The protein belongs to the CLV3/ESR signal peptide family. The O-glycosylation (arabinosylation) of the hydroxyproline Pro-69 enhances binding affinity of the CLE1p peptide for its receptor. As to expression, mostly expressed in roots and seedlings, and, to a lower extent, in stems and apex.

The protein localises to the secreted. The protein resides in the extracellular space. Extracellular signal peptide that regulates cell fate. This chain is CLAVATA3/ESR (CLE)-related protein 1, found in Arabidopsis thaliana (Mouse-ear cress).